The following is a 72-amino-acid chain: Neuropeptide SIFamide (72 aa).

The signal sequence occupies residues 1–26 (MALRFTLTLLLVTILVAAILLGSSEA). An N-linked (GlcNAc...) asparagine glycan is attached at N34. At F38 the chain carries Phenylalanine amide. The propeptide occupies 42-72 (NSLDYDSAKMSAVCEVAMEACPMWFPQNDSK).

The protein belongs to the FARP (FMRFamide related peptide) family. As to expression, strongly expressed in two pairs of neurons in the pars intercerebralis (at protein level).

It localises to the secreted. Functionally, ligand for the neuropeptide SIFamide receptor. Modulates sexual behavior by negatively regulating female receptivity to male courtship and by playing a role in male sex discrimination. Also involved in promoting sleep. The protein is Neuropeptide SIFamide of Drosophila melanogaster (Fruit fly).